We begin with the raw amino-acid sequence, 457 residues long: Forkhead box protein N3 (457 aa).

The disordered stretch occupies residues 1–24 (MGPVMPASKKAESSGISVSSGLSQ). The segment covering 13–23 (SSGISVSSGLS) has biased composition (low complexity). Residues S83, S85, and S97 each carry the phosphoserine modification. Residues 86–109 (PVQDLDDDTPPSPAHSDMPYDARQ) form a disordered region. The segment at residues 114–210 (KPPYSFSCLI…QALKKTPYHP (97 aa)) is a DNA-binding region (fork-head). Positions 285 to 422 (RTESEPPCGS…PESDDEEMKE (138 aa)) are disordered. Composition is skewed to low complexity over residues 308 to 331 (SSAK…SSSS) and 342 to 353 (GSQEGSEGSFQS). A compositionally biased stretch (basic and acidic residues) spans 354–376 (HESHSEPEEEDRKPSPKEGKDAL). Positions 384-396 (QHKKRQHFAKARK) are enriched in basic residues. S415 bears the Phosphoserine mark.

Interacts through its C-terminus with the C-terminus of SNW1/SKIP.

Its subcellular location is the nucleus. Functionally, acts as a transcriptional repressor. May be involved in DNA damage-inducible cell cycle arrests (checkpoints). The sequence is that of Forkhead box protein N3 (Foxn3) from Mus musculus (Mouse).